The sequence spans 219 residues: Ion-translocating oxidoreductase complex subunit G (219 aa).

A helical membrane pass occupies residues 25 to 45; sequence GLLLGLFSLVSALMLALASDA. Residue T187 is modified to FMN phosphoryl threonine.

It belongs to the RnfG family. The complex is composed of six subunits: RnfA, RnfB, RnfC, RnfD, RnfE and RnfG. FMN serves as cofactor.

It localises to the cellular chromatophore membrane. Functionally, part of a membrane-bound complex that couples electron transfer with translocation of ions across the membrane. The polypeptide is Ion-translocating oxidoreductase complex subunit G (Cereibacter sphaeroides (strain ATCC 17023 / DSM 158 / JCM 6121 / CCUG 31486 / LMG 2827 / NBRC 12203 / NCIMB 8253 / ATH 2.4.1.) (Rhodobacter sphaeroides)).